A 209-amino-acid chain; its full sequence is Imidazole glycerol phosphate synthase subunit HisH (209 aa).

Residues 1-205 (MIAIIDYGMG…KGVVETWKSS (205 aa)) form the Glutamine amidotransferase type-1 domain. Residue cysteine 79 is the Nucleophile of the active site. Active-site residues include histidine 180 and glutamate 182.

Heterodimer of HisH and HisF.

Its subcellular location is the cytoplasm. It carries out the reaction 5-[(5-phospho-1-deoxy-D-ribulos-1-ylimino)methylamino]-1-(5-phospho-beta-D-ribosyl)imidazole-4-carboxamide + L-glutamine = D-erythro-1-(imidazol-4-yl)glycerol 3-phosphate + 5-amino-1-(5-phospho-beta-D-ribosyl)imidazole-4-carboxamide + L-glutamate + H(+). It catalyses the reaction L-glutamine + H2O = L-glutamate + NH4(+). The protein operates within amino-acid biosynthesis; L-histidine biosynthesis; L-histidine from 5-phospho-alpha-D-ribose 1-diphosphate: step 5/9. Functionally, IGPS catalyzes the conversion of PRFAR and glutamine to IGP, AICAR and glutamate. The HisH subunit catalyzes the hydrolysis of glutamine to glutamate and ammonia as part of the synthesis of IGP and AICAR. The resulting ammonia molecule is channeled to the active site of HisF. In Bacillus thuringiensis subsp. konkukian (strain 97-27), this protein is Imidazole glycerol phosphate synthase subunit HisH.